The sequence spans 237 residues: MKREQLYSGKAKTIYRTDDPDTLIAEFRNSLTAFNGEKKGEMELKGYYNAQISKKIFEMLEASGVKTHFVSMLTDIDMLVREVEIIKIEVIVRNIAAGSITRKYPIKEGTILKPPVLVFDFKSDEYGDPMLNDDIALALGIATREELAELRKLALRVNELLVPYLDEKGILLPDFKLEFGRREGEIVLADEISCDTCRFWDKKTGQSMDKDVFRFDKGDISKAYEEVARRIVPEIFE.

This sequence belongs to the SAICAR synthetase family.

The enzyme catalyses 5-amino-1-(5-phospho-D-ribosyl)imidazole-4-carboxylate + L-aspartate + ATP = (2S)-2-[5-amino-1-(5-phospho-beta-D-ribosyl)imidazole-4-carboxamido]succinate + ADP + phosphate + 2 H(+). It functions in the pathway purine metabolism; IMP biosynthesis via de novo pathway; 5-amino-1-(5-phospho-D-ribosyl)imidazole-4-carboxamide from 5-amino-1-(5-phospho-D-ribosyl)imidazole-4-carboxylate: step 1/2. This chain is Phosphoribosylaminoimidazole-succinocarboxamide synthase, found in Methanosarcina mazei (strain ATCC BAA-159 / DSM 3647 / Goe1 / Go1 / JCM 11833 / OCM 88) (Methanosarcina frisia).